The chain runs to 256 residues: 5-keto-4-deoxy-D-glucarate aldolase (256 aa).

The Proton acceptor role is filled by H50. Residue Q151 coordinates substrate. E153 provides a ligand contact to Mg(2+). Substrate contacts are provided by S178 and D179. Mg(2+) is bound at residue D179.

This sequence belongs to the HpcH/HpaI aldolase family. KDGluc aldolase subfamily. As to quaternary structure, homohexamer; trimer of dimers. It depends on Mg(2+) as a cofactor.

The catalysed reaction is 5-dehydro-4-deoxy-D-glucarate = 2-hydroxy-3-oxopropanoate + pyruvate. It carries out the reaction 2-dehydro-3-deoxy-D-glucarate = 2-hydroxy-3-oxopropanoate + pyruvate. It functions in the pathway carbohydrate acid metabolism; galactarate degradation; D-glycerate from galactarate: step 2/3. Functionally, catalyzes the reversible retro-aldol cleavage of both 5-keto-4-deoxy-D-glucarate and 2-keto-3-deoxy-D-glucarate to pyruvate and tartronic semialdehyde. In Salmonella paratyphi C (strain RKS4594), this protein is 5-keto-4-deoxy-D-glucarate aldolase.